We begin with the raw amino-acid sequence, 669 residues long: MPRSRNPSQGMPRDSSDSCGLSPVETPKGKKRARSLDRQVPRKKDPESSNTRCPSSATCRRTASDGARSSESPSHFAEAQGATAAALPPGEGRGFLPSEQGPPEDTKKERLPREAQQSWLRLVLNILLMRIEEPREKASRASKGKGDLPEAAEEPALRKKSHEKRTSRKKHSHRKPIAEEPPGPQTAEAQGREDVPPSLAASSAPHEIALGLICRGGPDSDLPQALPTEGDHAETPDSFGQASGPPLEEDPRKPDQDDVIWQIVELLKKAGDQLEEEQVQIPQPEAVPPRKPTPLPRKKSQEKKSSLKRVLSLKKPASEEPKRVGTATTLGPETRPKRPSFLPLCVSSQRASTSSSLDLEAPEFQEVPSVDGGGSHPSELHTPAAIFQGPEEKPLLDRASESREFRRKILVLLQSAEDERGEQEAQAQEAEKAGENPTPAGKVKSQVKKSNLRRAFSLRKHSSKDSKKTEASGTPGSGSLEARPPKKHGFLPMCVSGHRASISSSPESLEFQKTEAAGGAPAGSPGAPFQARSHTPDEGPSPERAWESKEFMIQKLVASLQEVDRDLGRQIRKYPSFKRFFNEFSDASLRKLVATLERQKASLSEEGRSLANRPPPCAFGTLNKFAATRSCTICTLMQSRGEYKGHSYAHFLSRKAEQDITNLDSQSPD.

4 disordered regions span residues 1–116 (MPRS…REAQ), 131–259 (IEEP…QDDV), 273–401 (QLEE…RASE), and 413–544 (LQSA…SPER). Residues 34-47 (RSLDRQVPRKKDPE) show a composition bias toward basic and acidic residues. A compositionally biased stretch (polar residues) spans 48–73 (SSNTRCPSSATCRRTASDGARSSESP). 2 stretches are compositionally biased toward basic and acidic residues: residues 104–113 (EDTKKERLPR) and 131–148 (IEEP…KGDL). Residues 158 to 175 (RKKSHEKRTSRKKHSHRK) are compositionally biased toward basic residues. Residues 285 to 295 (EAVPPRKPTPL) are compositionally biased toward pro residues. Lys314 participates in a covalent cross-link: Glycyl lysine isopeptide (Lys-Gly) (interchain with G-Cter in SUMO2). Over residues 346-357 (VSSQRASTSSSL) the composition is skewed to polar residues. A compositionally biased stretch (basic and acidic residues) spans 390 to 401 (PEEKPLLDRASE). The span at 445–462 (SQVKKSNLRRAFSLRKHS) shows a compositional bias: basic residues. The segment covering 516–528 (AAGGAPAGSPGAP) has biased composition (low complexity).

The protein is Protein BNIP5 (Bnip5) of Mus musculus (Mouse).